We begin with the raw amino-acid sequence, 235 residues long: Sugar fermentation stimulation protein homolog (235 aa).

It belongs to the SfsA family.

The chain is Sugar fermentation stimulation protein homolog from Maricaulis maris (strain MCS10) (Caulobacter maris).